Reading from the N-terminus, the 309-residue chain is Branched-chain-amino-acid aminotransferase (309 aa).

Lys-160 bears the N6-(pyridoxal phosphate)lysine mark.

The protein belongs to the class-IV pyridoxal-phosphate-dependent aminotransferase family. In terms of assembly, homohexamer. Requires pyridoxal 5'-phosphate as cofactor.

The catalysed reaction is L-leucine + 2-oxoglutarate = 4-methyl-2-oxopentanoate + L-glutamate. It carries out the reaction L-isoleucine + 2-oxoglutarate = (S)-3-methyl-2-oxopentanoate + L-glutamate. The enzyme catalyses L-valine + 2-oxoglutarate = 3-methyl-2-oxobutanoate + L-glutamate. Its pathway is amino-acid biosynthesis; L-isoleucine biosynthesis; L-isoleucine from 2-oxobutanoate: step 4/4. It participates in amino-acid biosynthesis; L-leucine biosynthesis; L-leucine from 3-methyl-2-oxobutanoate: step 4/4. It functions in the pathway amino-acid biosynthesis; L-valine biosynthesis; L-valine from pyruvate: step 4/4. Its function is as follows. Acts on leucine, isoleucine and valine. In Escherichia coli O157:H7, this protein is Branched-chain-amino-acid aminotransferase (ilvE).